Reading from the N-terminus, the 307-residue chain is N-acetylglucosaminyl-diphospho-decaprenol L-rhamnosyltransferase (307 aa).

This sequence belongs to the glycosyltransferase 2 family. Requires Mn(2+) as cofactor. Mg(2+) is required as a cofactor.

The enzyme catalyses N-acetyl-alpha-D-glucosaminyl-1-diphospho-trans,octa-cis-decaprenol + dTDP-beta-L-rhamnose = alpha-L-rhamnosyl-(1-&gt;3)-N-acetyl-alpha-D-glucosaminyl-diphospho-trans,octa-cis-decaprenol + dTDP + H(+). Involved in the biosynthesis of the mycolylarabinogalactan-peptidoglycan (mAGP) complex, an essential component of the mycobacterial cell wall. Catalyzes the transfer of the rhamnosyl moiety from dTDP-rhamnosyl (dTDP-Rha) onto the decaprenyl-pyrophosphoryl-GlcNAc (C50-PP-GlcNAc), yielding rhamnosyl-decaprenyl-pyrophosphoryl-GlcNAc (Rha-C50-PP-GlcNAc). In Mycobacterium tuberculosis (strain CDC 1551 / Oshkosh), this protein is N-acetylglucosaminyl-diphospho-decaprenol L-rhamnosyltransferase (wbbL).